The following is a 150-amino-acid chain: 1,4-dihydroxy-2-naphthoyl-CoA hydrolase (150 aa).

The active site involves Asp22.

Belongs to the 4-hydroxybenzoyl-CoA thioesterase family. DHNA-CoA hydrolase subfamily.

It catalyses the reaction 1,4-dihydroxy-2-naphthoyl-CoA + H2O = 1,4-dihydroxy-2-naphthoate + CoA + H(+). It functions in the pathway cofactor biosynthesis; phylloquinone biosynthesis. Its pathway is quinol/quinone metabolism; 1,4-dihydroxy-2-naphthoate biosynthesis; 1,4-dihydroxy-2-naphthoate from chorismate: step 7/7. Functionally, catalyzes the hydrolysis of 1,4-dihydroxy-2-naphthoyl-CoA (DHNA-CoA) to 1,4-dihydroxy-2-naphthoate (DHNA), a reaction involved in phylloquinone (vitamin K1) biosynthesis. This Prochlorococcus marinus (strain NATL1A) protein is 1,4-dihydroxy-2-naphthoyl-CoA hydrolase.